A 163-amino-acid chain; its full sequence is Methyl-CpG-binding domain-containing protein 3 (163 aa).

The CW-type zinc-finger motif lies at 6-56 (TTLIDSYAAQCWKCLKVRSIESQEDYEEIRSKTLEKFFECKRCEEPGDMVM). Positions 65–137 (WFQDEHSIPK…EEVSFAAPKR (73 aa)) constitute an MBD domain. The interval 140-163 (LKKKPVDSHSSSRNTEEDGVSRDA) is disordered. Over residues 153–163 (NTEEDGVSRDA) the composition is skewed to basic and acidic residues.

The protein resides in the nucleus. Its function is as follows. Probable transcriptional regulator. This chain is Methyl-CpG-binding domain-containing protein 3 (MBD3), found in Arabidopsis thaliana (Mouse-ear cress).